Here is a 454-residue protein sequence, read N- to C-terminus: tRNA modification GTPase MnmE (454 aa).

R23, E80, and K120 together coordinate (6S)-5-formyl-5,6,7,8-tetrahydrofolate. Positions 216-377 constitute a TrmE-type G domain; it reads GMKVVIAGRP…LREHLKQSMG (162 aa). N226 contacts K(+). GTP-binding positions include 226–231, 245–251, and 270–273; these read NAGKSS, TDIAGTT, and DTAG. Residue S230 participates in Mg(2+) binding. 3 residues coordinate K(+): T245, I247, and T250. T251 contacts Mg(2+). K454 contacts (6S)-5-formyl-5,6,7,8-tetrahydrofolate.

It belongs to the TRAFAC class TrmE-Era-EngA-EngB-Septin-like GTPase superfamily. TrmE GTPase family. As to quaternary structure, homodimer. Heterotetramer of two MnmE and two MnmG subunits. Requires K(+) as cofactor.

Its subcellular location is the cytoplasm. Exhibits a very high intrinsic GTPase hydrolysis rate. Involved in the addition of a carboxymethylaminomethyl (cmnm) group at the wobble position (U34) of certain tRNAs, forming tRNA-cmnm(5)s(2)U34. This Mannheimia succiniciproducens (strain KCTC 0769BP / MBEL55E) protein is tRNA modification GTPase MnmE.